The sequence spans 495 residues: Glutamyl-tRNA(Gln) amidotransferase subunit A (495 aa).

Active-site charge relay system residues include Lys-75 and Ser-150. Ser-174 acts as the Acyl-ester intermediate in catalysis.

It belongs to the amidase family. GatA subfamily. As to quaternary structure, heterotrimer of A, B and C subunits.

The catalysed reaction is L-glutamyl-tRNA(Gln) + L-glutamine + ATP + H2O = L-glutaminyl-tRNA(Gln) + L-glutamate + ADP + phosphate + H(+). Functionally, allows the formation of correctly charged Gln-tRNA(Gln) through the transamidation of misacylated Glu-tRNA(Gln) in organisms which lack glutaminyl-tRNA synthetase. The reaction takes place in the presence of glutamine and ATP through an activated gamma-phospho-Glu-tRNA(Gln). This is Glutamyl-tRNA(Gln) amidotransferase subunit A from Ralstonia nicotianae (strain ATCC BAA-1114 / GMI1000) (Ralstonia solanacearum).